The sequence spans 752 residues: Probable beta-glucosidase D (752 aa).

Positions 1-18 (MRFVSLAVGAALLGAAGA) are cleaved as a signal peptide. N-linked (GlcNAc...) asparagine glycans are attached at residues Asn-187 and Asn-237. Asp-265 is an active-site residue. Asn-299, Asn-343, Asn-441, Asn-510, Asn-532, Asn-571, Asn-586, Asn-638, Asn-661, and Asn-743 each carry an N-linked (GlcNAc...) asparagine glycan.

It belongs to the glycosyl hydrolase 3 family.

Its subcellular location is the secreted. It catalyses the reaction Hydrolysis of terminal, non-reducing beta-D-glucosyl residues with release of beta-D-glucose.. Its pathway is glycan metabolism; cellulose degradation. Functionally, beta-glucosidases are one of a number of cellulolytic enzymes involved in the degradation of cellulosic biomass. Catalyzes the last step releasing glucose from the inhibitory cellobiose. In Aspergillus flavus (strain ATCC 200026 / FGSC A1120 / IAM 13836 / NRRL 3357 / JCM 12722 / SRRC 167), this protein is Probable beta-glucosidase D (bglD).